The following is a 116-amino-acid chain: Large ribosomal subunit protein bL17 (116 aa).

The protein belongs to the bacterial ribosomal protein bL17 family. In terms of assembly, part of the 50S ribosomal subunit. Contacts protein L32.

The protein is Large ribosomal subunit protein bL17 of Helicobacter pylori (strain P12).